The chain runs to 139 residues: Nucleoside diphosphate kinase (139 aa).

ATP contacts are provided by Lys-12, Phe-60, Arg-88, Thr-94, Arg-105, and Asn-115. Residue His-118 is the Pros-phosphohistidine intermediate of the active site.

The protein belongs to the NDK family. Homotetramer. Mg(2+) serves as cofactor.

The protein resides in the cytoplasm. The enzyme catalyses a 2'-deoxyribonucleoside 5'-diphosphate + ATP = a 2'-deoxyribonucleoside 5'-triphosphate + ADP. It catalyses the reaction a ribonucleoside 5'-diphosphate + ATP = a ribonucleoside 5'-triphosphate + ADP. Major role in the synthesis of nucleoside triphosphates other than ATP. The ATP gamma phosphate is transferred to the NDP beta phosphate via a ping-pong mechanism, using a phosphorylated active-site intermediate. The polypeptide is Nucleoside diphosphate kinase (Caldanaerobacter subterraneus subsp. tengcongensis (strain DSM 15242 / JCM 11007 / NBRC 100824 / MB4) (Thermoanaerobacter tengcongensis)).